We begin with the raw amino-acid sequence, 209 residues long: Thiamine-phosphate synthase (209 aa).

4-amino-2-methyl-5-(diphosphooxymethyl)pyrimidine-binding positions include 35 to 39 (QYRDK) and asparagine 67. Mg(2+)-binding residues include aspartate 68 and aspartate 86. Threonine 105 provides a ligand contact to 4-amino-2-methyl-5-(diphosphooxymethyl)pyrimidine. 132 to 134 (SNT) provides a ligand contact to 2-[(2R,5Z)-2-carboxy-4-methylthiazol-5(2H)-ylidene]ethyl phosphate. Lysine 135 contributes to the 4-amino-2-methyl-5-(diphosphooxymethyl)pyrimidine binding site. Glycine 162 serves as a coordination point for 2-[(2R,5Z)-2-carboxy-4-methylthiazol-5(2H)-ylidene]ethyl phosphate.

Belongs to the thiamine-phosphate synthase family. Mg(2+) is required as a cofactor.

The catalysed reaction is 2-[(2R,5Z)-2-carboxy-4-methylthiazol-5(2H)-ylidene]ethyl phosphate + 4-amino-2-methyl-5-(diphosphooxymethyl)pyrimidine + 2 H(+) = thiamine phosphate + CO2 + diphosphate. It carries out the reaction 2-(2-carboxy-4-methylthiazol-5-yl)ethyl phosphate + 4-amino-2-methyl-5-(diphosphooxymethyl)pyrimidine + 2 H(+) = thiamine phosphate + CO2 + diphosphate. The enzyme catalyses 4-methyl-5-(2-phosphooxyethyl)-thiazole + 4-amino-2-methyl-5-(diphosphooxymethyl)pyrimidine + H(+) = thiamine phosphate + diphosphate. It participates in cofactor biosynthesis; thiamine diphosphate biosynthesis; thiamine phosphate from 4-amino-2-methyl-5-diphosphomethylpyrimidine and 4-methyl-5-(2-phosphoethyl)-thiazole: step 1/1. Its function is as follows. Condenses 4-methyl-5-(beta-hydroxyethyl)thiazole monophosphate (THZ-P) and 2-methyl-4-amino-5-hydroxymethyl pyrimidine pyrophosphate (HMP-PP) to form thiamine monophosphate (TMP). The chain is Thiamine-phosphate synthase from Pseudomonas fluorescens (strain SBW25).